Here is a 517-residue protein sequence, read N- to C-terminus: Transmembrane protein 180 (517 aa).

The Extracellular segment spans residues 1-11 (MRLGGPWAWLL). The helical transmembrane segment at 12 to 43 (GLPTAVVYGSLALFVSVLHNVFLLYYVDTFVS) threads the bilayer. The Cytoplasmic segment spans residues 44 to 55 (VYKIDKAAFWVG). The helical transmembrane segment at 56–74 (ETVFLLWNSLNDPLFGWLS) threads the bilayer. Residues 75-100 (DRQFLSSQPRSGAGLSSRAVVLARVR) are Extracellular-facing. Residues 101 to 118 (ALGWHGPLLALSFLAFWV) traverse the membrane as a helical segment. Over 119-126 (PWAPAGLQ) the chain is Cytoplasmic. A helical membrane pass occupies residues 127 to 151 (FLLCLCLYDGFLTLVDLHHHALLAD). Topologically, residues 152 to 155 (LALS) are extracellular. The chain crosses the membrane as a helical span at residues 156 to 179 (AHDRTHLNFYCSLFSAAGSLSVFA). Residues 180 to 191 (SYAFWNKEDFSS) are Cytoplasmic-facing. A helical membrane pass occupies residues 192–223 (FRAFCLALATGSGLGFVGAARLLRRRVEAAGR). At 224 to 264 (EPGCPAMAVNDGLCEEELLVGGEEAGSITLGQYLQQLARHR) the chain is on the extracellular side. Residues 265–292 (NFLWFVGMDLVQVFHCHFNSNFFPLFLE) traverse the membrane as a helical segment. Residues 293-305 (HLLSDHISLSTGS) lie on the Cytoplasmic side of the membrane. The chain crosses the membrane as a helical span at residues 306-325 (FLLGISYVAPHLNNLYFLPL). The Extracellular portion of the chain corresponds to 326–330 (CRRWG). Residues 331-350 (VYAVVRGLFLLKLGLSLLML) traverse the membrane as a helical segment. The Cytoplasmic segment spans residues 351–358 (LAGPDHPG). A helical transmembrane segment spans residues 359-393 (LLCLFIASNRVFTEGTCKLLTLVVTDLVDEDLVLN). Residues 394-402 (HRKQAASAL) are Extracellular-facing. A helical transmembrane segment spans residues 403–429 (LFGMVALVTKPGQTFAPLLGTWLLCFY). The Cytoplasmic segment spans residues 430 to 466 (TGHDLFQQHPPAPVGSAQPWPEPPAPPPAQAPPLRQG). The helical transmembrane segment at 467–485 (CFYLLVLVPIACALLQLFT) threads the bilayer. Residues 486–517 (WSQFTLHGRRLHMVKAQRQSLSRAQTLDVKMV) lie on the Extracellular side of the membrane.

The protein localises to the cell membrane. The sequence is that of Transmembrane protein 180 from Bos taurus (Bovine).